Reading from the N-terminus, the 393-residue chain is Fructose-bisphosphate aldolase 4, cytosolic (393 aa).

A substrate-binding site is contributed by arginine 73. Cysteine 207 carries the S-glutathionyl cysteine; transient; alternate modification. At cysteine 207 the chain carries S-nitrosocysteine; transient; alternate. Residue glutamate 217 is the Proton acceptor of the active site. Lysine 259 (schiff-base intermediate with dihydroxyacetone-P) is an active-site residue. Substrate contacts are provided by residues 301–303 and arginine 333; that span reads SGG.

Belongs to the class I fructose-bisphosphate aldolase family. As to quaternary structure, homotetramer. S-glutathionylated at Cys-207. Post-translationally, S-nitrosylated at Cys-207. As to expression, highly expressed in flowers.

It is found in the cytoplasm. The protein resides in the cytosol. The catalysed reaction is beta-D-fructose 1,6-bisphosphate = D-glyceraldehyde 3-phosphate + dihydroxyacetone phosphate. Its pathway is carbohydrate degradation; glycolysis; D-glyceraldehyde 3-phosphate and glycerone phosphate from D-glucose: step 4/4. Fructose-bisphosphate aldolase that plays a key role in glycolysis and gluconeogenesis. This chain is Fructose-bisphosphate aldolase 4, cytosolic, found in Arabidopsis thaliana (Mouse-ear cress).